A 209-amino-acid polypeptide reads, in one-letter code: Protein TIFY 11c (209 aa).

The region spanning 93–128 is the Tify domain; it reads EITEKAQLTIFYGGSVVVFDDFPAEKAGELMKLAGS. Positions 153–177 match the Jas motif; it reads PIARKVSLQRFLEKRKNRIVVAEPL. A Nuclear localization signal motif is present at residues 155-162; sequence ARKVSLQR. The segment at 175 to 209 is disordered; that stretch reads EPLPESEKKEAESSKRAKKDDGGASWLQVNPTLSL. Residues 179–196 show a composition bias toward basic and acidic residues; it reads ESEKKEAESSKRAKKDDG.

It belongs to the TIFY/JAZ family. Ubiquitinated. Targeted for degradation by the SCF(COI1) E3 ubiquitin ligase-proteasome pathway during jasmonate signaling.

The protein resides in the nucleus. In terms of biological role, repressor of jasmonate responses. This Oryza sativa subsp. indica (Rice) protein is Protein TIFY 11c.